The chain runs to 148 residues: Deoxyuridine 5'-triphosphate nucleotidohydrolase (148 aa).

Substrate is bound by residues arginine 68–glycine 70, asparagine 81, threonine 85–aspartate 87, and lysine 95.

Belongs to the dUTPase family. It depends on Mg(2+) as a cofactor.

The enzyme catalyses dUTP + H2O = dUMP + diphosphate + H(+). It participates in pyrimidine metabolism; dUMP biosynthesis; dUMP from dCTP (dUTP route): step 2/2. Functionally, this enzyme is involved in nucleotide metabolism: it produces dUMP, the immediate precursor of thymidine nucleotides and it decreases the intracellular concentration of dUTP so that uracil cannot be incorporated into DNA. The chain is Deoxyuridine 5'-triphosphate nucleotidohydrolase from Rickettsia peacockii (strain Rustic).